Consider the following 276-residue polypeptide: L-aminoadipate-semialdehyde dehydrogenase-phosphopantetheinyl transferase (276 aa).

This sequence belongs to the P-Pant transferase superfamily. AcpS family.

The catalysed reaction is apo-[ACP] + CoA = holo-[ACP] + adenosine 3',5'-bisphosphate + H(+). Catalyzes the transfer of a 4'-phosphopantetheine moiety from coenzyme A to a serine residue of acceptor proteins, such as alpha-aminoadipate reductase. Necessary for alpha-aminoadipate reductase activity. The protein is L-aminoadipate-semialdehyde dehydrogenase-phosphopantetheinyl transferase (LYS5) of Eremothecium gossypii (strain ATCC 10895 / CBS 109.51 / FGSC 9923 / NRRL Y-1056) (Yeast).